Here is a 237-residue protein sequence, read N- to C-terminus: Regulator of G-protein signaling 9-binding protein (237 aa).

Residues 1-212 are Cytoplasmic-facing; sequence MAREECKALL…ERAGPCDPSK (212 aa). The stretch at 30 to 54 forms a coiled coil; sequence SADTQDLREELQKTRQKARELAVAT. Positions 153–202 are SNARE-like; it reads EVLQVGEMIDDMEMKVNVPRWTVQARQAAGAELLSGASAGASSAGGISVE. The helical; Anchor for type IV membrane protein transmembrane segment at 213-233 threads the bilayer; it reads ALAATVFSAVLLVAVALALCV. The Extracellular portion of the chain corresponds to 234–237; it reads AKLS.

This sequence belongs to the RGS7BP/RGS9BP family. As to quaternary structure, specifically interacts with isoform RGS9-1 of RGS9. Interaction is decreased when RGS9-1 is phosphorylated at 'Ser-475'. Component of the RGS9-1-Gbeta5 complex composed of RGS9-1, Gbeta5 (GNB5) and RGS9BP. As to expression, predominantly expressed in photoreceptors of the retina. Weakly expressed in other areas of the central nervous system.

It localises to the membrane. Functionally, regulator of G protein-coupled receptor (GPCR) signaling in phototransduction. Participates in the recovery phase of visual transduction via its interaction with RGS9-1 isoform. Acts as a membrane-anchor that mediates the targeting of RGS9-1 to the photoreceptor outer segment, where phototransduction takes place. Enhances the ability of RGS9-1 to stimulate G protein GTPase activity, allowing the visual signal to be terminated on the physiologically time scale. It also controls the proteolytic stability of RGS9-1, probably by protecting it from degradation. This is Regulator of G-protein signaling 9-binding protein (Rgs9bp) from Mus musculus (Mouse).